We begin with the raw amino-acid sequence, 828 residues long: Periplasmic nitrate reductase (828 aa).

Positions 1–31 (MKLSRRSFMKANAVAAAAAAAGLSVPGVARA) form a signal peptide, tat-type signal. In terms of domain architecture, 4Fe-4S Mo/W bis-MGD-type spans 39–95 (IKWDKAPCRFCGTGCGVLVGTQQGRVVACQGDPDAPVNRGLNCIKGYFLPKIMYGKD). Cys-46, Cys-49, Cys-53, and Cys-81 together coordinate [4Fe-4S] cluster. Mo-bis(molybdopterin guanine dinucleotide) contacts are provided by residues Lys-83, Gln-150, Asn-175, Cys-179, 212-219 (WGSNMAEM), 243-247 (STYQH), 262-264 (QSD), Met-372, Gln-376, Asn-482, 508-509 (SD), Lys-531, Asp-558, and 718-727 (TGRVLEHWHT). Phe-794 is a substrate binding site. Mo-bis(molybdopterin guanine dinucleotide) contacts are provided by Asn-802 and Lys-819.

This sequence belongs to the prokaryotic molybdopterin-containing oxidoreductase family. NasA/NapA/NarB subfamily. As to quaternary structure, component of the periplasmic nitrate reductase NapAB complex composed of NapA and NapB. Requires [4Fe-4S] cluster as cofactor. The cofactor is Mo-bis(molybdopterin guanine dinucleotide). Post-translationally, predicted to be exported by the Tat system. The position of the signal peptide cleavage has not been experimentally proven.

The protein localises to the periplasm. The enzyme catalyses 2 Fe(II)-[cytochrome] + nitrate + 2 H(+) = 2 Fe(III)-[cytochrome] + nitrite + H2O. Functionally, catalytic subunit of the periplasmic nitrate reductase complex NapAB. Receives electrons from NapB and catalyzes the reduction of nitrate to nitrite. This chain is Periplasmic nitrate reductase, found in Escherichia coli O1:K1 / APEC.